The sequence spans 369 residues: Chorismate synthase (369 aa).

NADP(+)-binding residues include arginine 48 and arginine 54. Residues 125 to 127, 238 to 239, glycine 278, 293 to 297, and arginine 319 each bind FMN; these read RSS, NA, and KPTSS.

This sequence belongs to the chorismate synthase family. As to quaternary structure, homotetramer. The cofactor is FMNH2.

The enzyme catalyses 5-O-(1-carboxyvinyl)-3-phosphoshikimate = chorismate + phosphate. The protein operates within metabolic intermediate biosynthesis; chorismate biosynthesis; chorismate from D-erythrose 4-phosphate and phosphoenolpyruvate: step 7/7. Catalyzes the anti-1,4-elimination of the C-3 phosphate and the C-6 proR hydrogen from 5-enolpyruvylshikimate-3-phosphate (EPSP) to yield chorismate, which is the branch point compound that serves as the starting substrate for the three terminal pathways of aromatic amino acid biosynthesis. This reaction introduces a second double bond into the aromatic ring system. The polypeptide is Chorismate synthase (Burkholderia thailandensis (strain ATCC 700388 / DSM 13276 / CCUG 48851 / CIP 106301 / E264)).